Reading from the N-terminus, the 445-residue chain is Selenocysteine lyase (445 aa).

N-acetylmethionine is present on M1. A disordered region spans residues M1–P28. At S129 the chain carries Phosphoserine. At K259 the chain carries N6-(pyridoxal phosphate)lysine. C388 (S-selanylcysteine intermediate) is an active-site residue.

Belongs to the class-V pyridoxal-phosphate-dependent aminotransferase family. As to quaternary structure, homodimer. Pyridoxal 5'-phosphate serves as cofactor.

The protein resides in the cytoplasm. It is found in the cytosol. It catalyses the reaction L-selenocysteine + AH2 = hydrogenselenide + L-alanine + A + H(+). In terms of biological role, catalyzes the decomposition of L-selenocysteine to L-alanine and elemental selenium. The sequence is that of Selenocysteine lyase (SCLY) from Homo sapiens (Human).